Here is a 534-residue protein sequence, read N- to C-terminus: Phosphoenolpyruvate carboxykinase (ATP) (534 aa).

The substrate site is built by Arg-60, Tyr-195, and Lys-201. ATP contacts are provided by residues Lys-201, His-221, and 237-245; that span reads GLSGTGKTT. Mn(2+) is bound by residues Lys-201 and His-221. Position 258 (Asp-258) interacts with Mn(2+). ATP contacts are provided by Glu-287, Arg-324, and Thr-449. A substrate-binding site is contributed by Arg-324.

The protein belongs to the phosphoenolpyruvate carboxykinase (ATP) family. Mn(2+) is required as a cofactor.

Its subcellular location is the cytoplasm. It carries out the reaction oxaloacetate + ATP = phosphoenolpyruvate + ADP + CO2. It participates in carbohydrate biosynthesis; gluconeogenesis. Its function is as follows. Involved in the gluconeogenesis. Catalyzes the conversion of oxaloacetate (OAA) to phosphoenolpyruvate (PEP) through direct phosphoryl transfer between the nucleoside triphosphate and OAA. This chain is Phosphoenolpyruvate carboxykinase (ATP), found in Flavobacterium johnsoniae (strain ATCC 17061 / DSM 2064 / JCM 8514 / BCRC 14874 / CCUG 350202 / NBRC 14942 / NCIMB 11054 / UW101) (Cytophaga johnsonae).